The following is a 476-amino-acid chain: Proline--tRNA ligase (476 aa).

Belongs to the class-II aminoacyl-tRNA synthetase family. ProS type 3 subfamily. In terms of assembly, homodimer.

The protein resides in the cytoplasm. It carries out the reaction tRNA(Pro) + L-proline + ATP = L-prolyl-tRNA(Pro) + AMP + diphosphate. Functionally, catalyzes the attachment of proline to tRNA(Pro) in a two-step reaction: proline is first activated by ATP to form Pro-AMP and then transferred to the acceptor end of tRNA(Pro). This chain is Proline--tRNA ligase, found in Mycoplasmopsis pulmonis (strain UAB CTIP) (Mycoplasma pulmonis).